The chain runs to 631 residues: Nucleoside triphosphatase I (631 aa).

Residues 42–204 (FLGLDSMHSL…TMLVNLLRPG (163 aa)) enclose the Helicase ATP-binding domain. 55–62 (HETGVGKT) is a binding site for ATP. The DEXH box signature appears at 141-144 (DECH). In terms of domain architecture, Helicase C-terminal spans 367 to 532 (KFIDVCLGIL…EFVQLFRVFK (166 aa)). Residues 457–524 (DIFILDMTWN…EIIQSKSKEF (68 aa)) form a binding to the cap-specific mRNA (nucleoside-2'-O-)-methyltransferase region.

Belongs to the helicase family. NPH I subfamily. As to quaternary structure, monomer. Interacts (via C-terminus) with RAP94/OPG109 (via N-terminus). Interacts with the cap-specific mRNA (nucleoside-2'-O-)-methyltransferase OPG102.

Its subcellular location is the virion. The catalysed reaction is a ribonucleoside 5'-triphosphate + H2O = a ribonucleoside 5'-diphosphate + phosphate + H(+). Functionally, DNA-dependent ATPase that acts as a 5' to 3' translocase on single-stranded DNA and thereby plays a role in transcription termination of viral early genes. Uses forward translocation in concert with the viral RNA polymerase RAP94/OPG109 subunit and the capping enzyme/VTF to catalyze release of UUUUUNU-containing nascent RNA from the elongation complex. In addition, acts as a positive elongation factor to assist transcription through problematic sequences. The protein is Nucleoside triphosphatase I (OPG123) of Vaccinia virus (strain Copenhagen) (VACV).